A 260-amino-acid polypeptide reads, in one-letter code: UPF0246 protein Bcen2424_2223 (260 aa).

Belongs to the UPF0246 family.

The polypeptide is UPF0246 protein Bcen2424_2223 (Burkholderia cenocepacia (strain HI2424)).